The chain runs to 301 residues: Pseudouridine-5'-phosphate glycosidase (301 aa).

Glu25 acts as the Proton donor in catalysis. The substrate site is built by Lys86 and Val106. Asp138 serves as a coordination point for Mn(2+). Ser140–Asp142 serves as a coordination point for substrate. Lys159 serves as the catalytic Nucleophile.

It belongs to the pseudouridine-5'-phosphate glycosidase family. In terms of assembly, homotrimer. Mn(2+) is required as a cofactor.

The enzyme catalyses D-ribose 5-phosphate + uracil = psi-UMP + H2O. Catalyzes the reversible cleavage of pseudouridine 5'-phosphate (PsiMP) to ribose 5-phosphate and uracil. Functions biologically in the cleavage direction, as part of a pseudouridine degradation pathway. This Geobacillus kaustophilus (strain HTA426) protein is Pseudouridine-5'-phosphate glycosidase.